The primary structure comprises 391 residues: G-patch domain-containing protein 1 (391 aa).

Residues Lys-15 to Pro-61 form the G-patch domain. 2 disordered regions span residues Val-80–Lys-132 and Lys-212–Arg-307. 2 stretches are compositionally biased toward acidic residues: residues Asp-92 to Asp-102 and Asn-265 to Lys-295. The short motif at Ala-305 to Ile-312 is the Nuclear localization signal element.

In terms of tissue distribution, strongly expressed in tissues with high cell proliferation activity that have a high demand for ribosome production such as shoot tips, leaves primordia, root tips and floral buds.

The protein localises to the nucleus. The protein resides in the nucleolus. Its function is as follows. Involved in ribosome biogenesis, required for normal progression of rRNA processing. Seems to promote cell proliferation in leaves. This chain is G-patch domain-containing protein 1, found in Arabidopsis thaliana (Mouse-ear cress).